The sequence spans 276 residues: MNFKKLLGVALVSALALTACKDEKAQAPATTAKTENKAPLKVGVMTGPEAQMTEVAVKIAKEKYGLDVELVQFTEYTQPNAALHSKDLDANAFQTVPYLEQEVKDRGYKLAIIGNTLVWPIAAYSKKIKNISELKDGATVAIPNNASNTARALLLLQAHGLLKLKDPKNVFATENDIIENPKNIKIVQADTSLLTRMLDDVELAVINNTYAGQAGLSPDKDGIIVESKDSPYVNLVVSREDNKDDPRLQTFVKSFQTEEVFQEALKLFNGGVVKGW.

An N-terminal signal peptide occupies residues 1-19 (MNFKKLLGVALVSALALTA). Residue cysteine 20 is the site of N-palmitoyl cysteine attachment. Residue cysteine 20 is the site of S-diacylglycerol cysteine attachment.

Belongs to the NlpA lipoprotein family.

It localises to the cell outer membrane. This Mannheimia haemolytica (Pasteurella haemolytica) protein is Outer membrane lipoprotein 2 (plpB).